A 269-amino-acid chain; its full sequence is MVPKVLVMSGYGINCETETAHAFQKAGAETDIVHINDLIAGKKKMADYEIIMFPGGFSYGDDTGSGNAFANKIKNNLFDDLKEFINSGKLILGICNGFQVMTNLGLFALPSTDYGERISALEANTNNRYECRWVHVKENDSICVFTKGITITHVPIAHGEGRFYCDEKTYFELKENKQIVFSYCDSEGNSANQEYPLNPNGAYYDIAGICDKTGRIMGLMPHPERSLYSISEPEYQLKKEIAKRNREIIPEFIESNLQIFKNAVEYFNK.

One can recognise a Glutamine amidotransferase type-1 domain in the interval 5-262; it reads VLVMSGYGIN…IESNLQIFKN (258 aa). The active-site Nucleophile is cysteine 95. Active-site residues include histidine 222, glutamate 224, and glutamate 232.

As to quaternary structure, part of the FGAM synthase complex composed of 1 PurL, 1 PurQ and 2 PurS subunits.

The protein resides in the cytoplasm. It carries out the reaction N(2)-formyl-N(1)-(5-phospho-beta-D-ribosyl)glycinamide + L-glutamine + ATP + H2O = 2-formamido-N(1)-(5-O-phospho-beta-D-ribosyl)acetamidine + L-glutamate + ADP + phosphate + H(+). The catalysed reaction is L-glutamine + H2O = L-glutamate + NH4(+). It participates in purine metabolism; IMP biosynthesis via de novo pathway; 5-amino-1-(5-phospho-D-ribosyl)imidazole from N(2)-formyl-N(1)-(5-phospho-D-ribosyl)glycinamide: step 1/2. In terms of biological role, part of the phosphoribosylformylglycinamidine synthase complex involved in the purines biosynthetic pathway. Catalyzes the ATP-dependent conversion of formylglycinamide ribonucleotide (FGAR) and glutamine to yield formylglycinamidine ribonucleotide (FGAM) and glutamate. The FGAM synthase complex is composed of three subunits. PurQ produces an ammonia molecule by converting glutamine to glutamate. PurL transfers the ammonia molecule to FGAR to form FGAM in an ATP-dependent manner. PurS interacts with PurQ and PurL and is thought to assist in the transfer of the ammonia molecule from PurQ to PurL. This chain is Phosphoribosylformylglycinamidine synthase subunit PurQ, found in Methanococcus maripaludis (strain C5 / ATCC BAA-1333).